The primary structure comprises 354 residues: CREB/ATF bZIP transcription factor (354 aa).

Disordered stretches follow at residues 1 to 95, 113 to 156, and 171 to 214; these read MRHS…PGEE, PRQP…AAEM, and GGCS…RKAA. Phosphoserine is present on Ser50. Residues 121–132 are compositionally biased toward low complexity; sequence DPGLSSPGPLSS. Gly residues-rich tracts occupy residues 133 to 143 and 190 to 199; these read SGGGSDSGGLW and PGGGGGGGSG. Positions 204–267 constitute a bZIP domain; it reads QAATKSPRKA…QALQEESRYL (64 aa). Residues 205 to 214 show a composition bias toward low complexity; that stretch reads AATKSPRKAA. A basic motif region spans residues 219–226; the sequence is RLNRLKKK. The segment at 232 to 267 is leucine-zipper; that stretch reads LESRVRGLAAENQELRAENRELGKRVQALQEESRYL. Positions 303–306 match the HCFC1-binding motif (HBM) motif; the sequence is DHDY.

Belongs to the bZIP family. ATF subfamily. As to quaternary structure, interacts with HCFC1; the interaction inhibits CREB3 transcriptional activity. Interacts with CREB3; the interaction occurs only in combination with HCFC1. As to expression, in adults, expressed most abundantly in heart, liver and skeletal muscle, moderately abundant in kidney and pancreas, and barely detectable in lung. In fetal tissues, expressed most abundantly in kidney and very low amounts in heart, lung and liver.

Its subcellular location is the nucleus. Functionally, strongly activates transcription when bound to HCFC1. Suppresses the expression of HSV proteins in cells infected with the virus in a HCFC1-dependent manner. Also suppresses the HCFC1-dependent transcriptional activation by CREB3 and reduces the amount of CREB3 in the cell. Able to down-regulate expression of some cellular genes in CREBZF-expressing cells. The chain is CREB/ATF bZIP transcription factor (CREBZF) from Homo sapiens (Human).